A 323-amino-acid chain; its full sequence is tRNA U34 carboxymethyltransferase (323 aa).

Residues Lys91, Trp105, Lys110, Gly130, 152-154, 181-182, Met196, Tyr200, and Arg315 each bind carboxy-S-adenosyl-L-methionine; these read DPT and IE.

Belongs to the class I-like SAM-binding methyltransferase superfamily. CmoB family. Homotetramer.

The enzyme catalyses carboxy-S-adenosyl-L-methionine + 5-hydroxyuridine(34) in tRNA = 5-carboxymethoxyuridine(34) in tRNA + S-adenosyl-L-homocysteine + H(+). Catalyzes carboxymethyl transfer from carboxy-S-adenosyl-L-methionine (Cx-SAM) to 5-hydroxyuridine (ho5U) to form 5-carboxymethoxyuridine (cmo5U) at position 34 in tRNAs. This chain is tRNA U34 carboxymethyltransferase, found in Salmonella paratyphi A (strain ATCC 9150 / SARB42).